The primary structure comprises 346 residues: Phosphoribosylformylglycinamidine cyclo-ligase (346 aa).

Belongs to the AIR synthase family.

The protein resides in the cytoplasm. It catalyses the reaction 2-formamido-N(1)-(5-O-phospho-beta-D-ribosyl)acetamidine + ATP = 5-amino-1-(5-phospho-beta-D-ribosyl)imidazole + ADP + phosphate + H(+). The protein operates within purine metabolism; IMP biosynthesis via de novo pathway; 5-amino-1-(5-phospho-D-ribosyl)imidazole from N(2)-formyl-N(1)-(5-phospho-D-ribosyl)glycinamide: step 2/2. This is Phosphoribosylformylglycinamidine cyclo-ligase from Shewanella piezotolerans (strain WP3 / JCM 13877).